Here is a 250-residue protein sequence, read N- to C-terminus: Ribosomal RNA small subunit methyltransferase J (250 aa).

Residues 96-97 and Asp168 contribute to the S-adenosyl-L-methionine site; that span reads RD.

Belongs to the methyltransferase superfamily. RsmJ family.

The protein localises to the cytoplasm. The catalysed reaction is guanosine(1516) in 16S rRNA + S-adenosyl-L-methionine = N(2)-methylguanosine(1516) in 16S rRNA + S-adenosyl-L-homocysteine + H(+). In terms of biological role, specifically methylates the guanosine in position 1516 of 16S rRNA. This chain is Ribosomal RNA small subunit methyltransferase J, found in Neisseria meningitidis serogroup B (strain ATCC BAA-335 / MC58).